Here is a 105-residue protein sequence, read N- to C-terminus: 3-phenylpropionate/cinnamic acid dioxygenase ferredoxin subunit (105 aa).

The Rieske domain maps to 4–99 (LFVCTVEELP…VVVKDGNIYI (96 aa)). [2Fe-2S] cluster is bound by residues Cys-42, His-44, Cys-62, and His-65.

The protein belongs to the bacterial ring-hydroxylating dioxygenase ferredoxin component family. In terms of assembly, this dioxygenase system consists of four proteins: the two subunits of the hydroxylase component (HcaE and HcaF), a ferredoxin (HcaC) and a ferredoxin reductase (HcaD). It depends on [2Fe-2S] cluster as a cofactor.

The protein operates within aromatic compound metabolism; 3-phenylpropanoate degradation. In terms of biological role, part of the multicomponent 3-phenylpropionate dioxygenase, that converts 3-phenylpropionic acid (PP) and cinnamic acid (CI) into 3-phenylpropionate-dihydrodiol (PP-dihydrodiol) and cinnamic acid-dihydrodiol (CI-dihydrodiol), respectively. This protein seems to be a 2Fe-2S ferredoxin. This is 3-phenylpropionate/cinnamic acid dioxygenase ferredoxin subunit from Photorhabdus laumondii subsp. laumondii (strain DSM 15139 / CIP 105565 / TT01) (Photorhabdus luminescens subsp. laumondii).